Reading from the N-terminus, the 918-residue chain is Calcium-transporting ATPase type 2C member 1 (918 aa).

Over 1–75 (MKVARFQKIP…SEDEPLWKKY (75 aa)) the chain is Cytoplasmic. A helical transmembrane segment spans residues 76-96 (ISQFKNPLIMLLLASAVISVL). Topologically, residues 97-98 (MH) are extracellular. The helical transmembrane segment at 99–119 (QFDDAVSITVAILIVVTVAFV) threads the bilayer. Over 120–267 (QEYRSEKSLE…LQKSMDLLGK (148 aa)) the chain is Cytoplasmic. A helical membrane pass occupies residues 268–288 (QLSFYSFGIIGIIMLVGWLLG). Topologically, residues 289–302 (KDILEMFTISVSLA) are extracellular. The chain crosses the membrane as a helical span at residues 303–323 (VAAIPEGLPIVVTVTLALGVM). The Cytoplasmic segment spans residues 324–703 (RMVKKRAIVK…IYNNIKNFVR (380 aa)). The 4-aspartylphosphate intermediate role is filled by D350. The Mg(2+) site is built by D643 and D647. The chain crosses the membrane as a helical span at residues 704–724 (FQLSTSIAALTLISLATLMNF). Residues 725-732 (PNPLNAMQ) are Extracellular-facing. Residues 733–753 (ILWINIIMDGPPAQSLGVEPV) form a helical membrane-spanning segment. Over 754–773 (DKDVIRKPPRNWKDSILTKN) the chain is Cytoplasmic. A helical transmembrane segment spans residues 774–794 (LILKILVSSIIIVCGTLFVFW). Residues 795–842 (RELRDNVITPRDTTMTFTCFVFFDMFNALSSRSQTKSVFEIGLCSNKM) lie on the Extracellular side of the membrane. A helical membrane pass occupies residues 843 to 863 (FCYAVLGSIMGQLLVIYFPPL). Topologically, residues 864–873 (QKVFQTESLS) are cytoplasmic. The chain crosses the membrane as a helical span at residues 874 to 894 (ILDLLFLLGLTSSVCIVAEII). Topologically, residues 895-918 (KKVERSREKIQKHVSSTSSSFLEV) are extracellular.

The protein belongs to the cation transport ATPase (P-type) (TC 3.A.3) family. Type IIA subfamily. In terms of assembly, monomer. Homodimer.

It localises to the golgi apparatus. Its subcellular location is the trans-Golgi network membrane. The protein localises to the golgi stack membrane. It carries out the reaction Ca(2+)(in) + ATP + H2O = Ca(2+)(out) + ADP + phosphate + H(+). It catalyses the reaction Mn(2+)(in) + ATP + H2O = Mn(2+)(out) + ADP + phosphate + H(+). Its function is as follows. ATP-driven pump that supplies the Golgi apparatus with Ca(2+) and Mn(2+) ions, both essential cofactors for processing and trafficking of newly synthesized proteins in the secretory pathway. Within a catalytic cycle, acquires Ca(2+) or Mn(2+) ions on the cytoplasmic side of the membrane and delivers them to the lumenal side. The transfer of ions across the membrane is coupled to ATP hydrolysis and is associated with a transient phosphorylation that shifts the pump conformation from inward-facing to outward-facing state. Plays a primary role in the maintenance of Ca(2+) homeostasis in the trans-Golgi compartment with a functional impact on Golgi and post-Golgi protein sorting as well as a structural impact on cisternae morphology. Responsible for loading the Golgi stores with Ca(2+) ions in keratinocytes, contributing to keratinocyte differentiation and epidermis integrity. Participates in Ca(2+) and Mn(2+) ions uptake into the Golgi store of hippocampal neurons and regulates protein trafficking required for neural polarity. May also play a role in the maintenance of Ca(2+) and Mn(2+) homeostasis and signaling in the cytosol while preventing cytotoxicity. This Pongo abelii (Sumatran orangutan) protein is Calcium-transporting ATPase type 2C member 1 (ATP2C1).